Here is a 560-residue protein sequence, read N- to C-terminus: Membrane protein insertase YidC (560 aa).

6 consecutive transmembrane segments (helical) span residues 5–25, 334–354, 357–377, 431–451, 476–496, and 522–542; these read IINL…WQYF, AIDF…MNFF, YVGN…LLMF, LPIL…YVTI, LFGL…WPIL, and FMPL…LIYW.

The protein belongs to the OXA1/ALB3/YidC family. Type 1 subfamily. Interacts with the Sec translocase complex via SecD. Specifically interacts with transmembrane segments of nascent integral membrane proteins during membrane integration.

It is found in the cell inner membrane. Functionally, required for the insertion and/or proper folding and/or complex formation of integral membrane proteins into the membrane. Involved in integration of membrane proteins that insert both dependently and independently of the Sec translocase complex, as well as at least some lipoproteins. Aids folding of multispanning membrane proteins. The protein is Membrane protein insertase YidC of Rickettsia massiliae (strain Mtu5).